The primary structure comprises 316 residues: Probable prolyl 4-hydroxylase 7 (316 aa).

Residues 1–4 (MDSR) are Cytoplasmic-facing. A helical; Signal-anchor for type II membrane protein transmembrane segment spans residues 5 to 24 (IFLAFSLCFLFTLPLISSAP). Residues 25 to 316 (NRFLTRSSNT…CRKSCKACSS (292 aa)) are Lumenal-facing. The N-linked (GlcNAc...) asparagine glycan is linked to Asn-96. The region spanning 139–261 (NGESMQILHY…KWSATRWIHV (123 aa)) is the Fe2OG dioxygenase domain. His-157 and Asp-159 together coordinate Fe cation. A glycan (N-linked (GlcNAc...) asparagine) is linked at Asn-233. His-242 contributes to the Fe cation binding site. Lys-252 provides a ligand contact to 2-oxoglutarate. The ShKT domain maps to 274 to 314 (CMDENVSCEKWAKAGECQKNPTYMVGSDKDHGYCRKSCKAC). Disulfide bonds link Cys-274–Cys-314, Cys-281–Cys-307, and Cys-290–Cys-311. N-linked (GlcNAc...) asparagine glycosylation is present at Asn-278.

This sequence belongs to the P4HA family. The cofactor is Fe(2+). L-ascorbate is required as a cofactor.

It is found in the endoplasmic reticulum membrane. The catalysed reaction is L-prolyl-[collagen] + 2-oxoglutarate + O2 = trans-4-hydroxy-L-prolyl-[collagen] + succinate + CO2. Its function is as follows. Catalyzes the post-translational formation of 4-hydroxyproline in -Xaa-Pro-Gly- sequences in proline-rich peptide sequences of plant glycoproteins and other proteins. Hydroxyprolines are important constituent of many plant cell wall glycoproteins such as extensins, hydroxyproline-rich glycoproteins, lectins and arabinogalactan proteins. The sequence is that of Probable prolyl 4-hydroxylase 7 from Arabidopsis thaliana (Mouse-ear cress).